The following is a 189-amino-acid chain: uncharacterized protein (189 aa).

Transmembrane regions (helical) follow at residues 20–40, 46–66, 100–120, and 126–146; these read FILGSVIFVEFFIFGLVYLTF, TIIITSGVILICLLPISIILI, VLLFIVGINFYLFGNLVSLNI, and FVLYSISAFFIIISIVVGDVI.

It to M.jannaschii MJ0795.1 and MJ1249.1.

Its subcellular location is the cell membrane. This is an uncharacterized protein from Methanocaldococcus jannaschii (strain ATCC 43067 / DSM 2661 / JAL-1 / JCM 10045 / NBRC 100440) (Methanococcus jannaschii).